Reading from the N-terminus, the 204-residue chain is Probable UbiX-like flavin prenyltransferase (204 aa).

FMN contacts are provided by residues 21 to 23, Ser47, 98 to 101, and Arg133; these read GAT and SMKS.

It belongs to the UbiX/PAD1 family. YclB subfamily. In terms of assembly, homododecamer.

The enzyme catalyses dimethylallyl phosphate + FMNH2 = prenylated FMNH2 + phosphate. Functionally, involved in the non-oxidative decarboxylation and detoxification of phenolic derivatives under both aerobic and anaerobic conditions. Flavin prenyltransferase that catalyzes the synthesis of the prenylated FMN cofactor (prenyl-FMN) for phenolic acid decarboxylase. The polypeptide is Probable UbiX-like flavin prenyltransferase (Bacillus subtilis (strain 168)).